Here is a 1029-residue protein sequence, read N- to C-terminus: Endosome/lysosome-associated apoptosis and autophagy regulator family member 2 (1029 aa).

The first 47 residues, 1 to 47 (MLFRARGPVRGRGWGRPAEAPRRGRSPPWSPAWICCWALAGCQAAWA), serve as a signal peptide directing secretion. At 48–929 (GDLPSSSSRP…TCETVDFWLK (882 aa)) the chain is on the extracellular side. An N-linked (GlcNAc...) asparagine glycan is attached at Asn169. 3 disulfide bridges follow: Cys293-Cys310, Cys323-Cys346, and Cys326-Cys358. N-linked (GlcNAc...) asparagine glycosylation is found at Asn405 and Asn691. An MRH domain is found at 672–877 (SDCFFYHEKE…LWESAEACPL (206 aa)). Cystine bridges form between Cys674–Cys720, Cys730–Cys758, Cys827–Cys863, and Cys839–Cys875. A helical membrane pass occupies residues 930-950 (VGAGVGAFTAVLLVALTCYFW). Over 951 to 1029 (KKNQKLEYKY…QLKTSRSPNI (79 aa)) the chain is Cytoplasmic. At Ser1018 the chain carries Phosphoserine.

This sequence belongs to the ELAPOR family.

The protein resides in the cell membrane. Functions as a regulator of the BMP signaling pathway and may be involved in epidermal differentiation. The protein is Endosome/lysosome-associated apoptosis and autophagy regulator family member 2 of Homo sapiens (Human).